We begin with the raw amino-acid sequence, 185 residues long: MKIIAGLGNPGQKYDKTKHNTGFMTLDHYLNEKGLSLDKDKFEGHWTKQKINGEDVILLEPQTYMNESGRSVSQIANFFKVAPEDVLIIQDDMDMPIGKIRIRANGKSGGHNGIKSIIRDLGTEKFNRLKIGIRHPKNTTVVSWVLTPFNDEQQKLMDDAFDTSVKIIDDFIAGRDSQYLMNKYN.

Y14 serves as a coordination point for tRNA. Catalysis depends on H19, which acts as the Proton acceptor. TRNA-binding residues include Y64, N66, and N112.

It belongs to the PTH family. In terms of assembly, monomer.

The protein resides in the cytoplasm. It carries out the reaction an N-acyl-L-alpha-aminoacyl-tRNA + H2O = an N-acyl-L-amino acid + a tRNA + H(+). Functionally, hydrolyzes ribosome-free peptidyl-tRNAs (with 1 or more amino acids incorporated), which drop off the ribosome during protein synthesis, or as a result of ribosome stalling. Its function is as follows. Catalyzes the release of premature peptidyl moieties from peptidyl-tRNA molecules trapped in stalled 50S ribosomal subunits, and thus maintains levels of free tRNAs and 50S ribosomes. In Lactobacillus helveticus (strain DPC 4571), this protein is Peptidyl-tRNA hydrolase.